The following is a 492-amino-acid chain: V-type proton ATPase subunit B 1 (492 aa).

This sequence belongs to the ATPase alpha/beta chains family. V-ATPase is a heteromultimeric enzyme composed of a peripheral catalytic V1 complex (main components: subunits A, B, C, D, E, and F) attached to an integral membrane V0 proton pore complex (main component: the proteolipid protein).

Non-catalytic subunit of the peripheral V1 complex of vacuolar ATPase. V-ATPase is responsible for acidifying a variety of intracellular compartments in eukaryotic cells. This Acetabularia acetabulum (Mermaid's wine glass) protein is V-type proton ATPase subunit B 1.